The following is a 350-amino-acid chain: Dihydroorotate dehydrogenase (quinone) (350 aa).

FMN contacts are provided by residues 67-71 (AGFDK) and Gly-91. Lys-71 serves as a coordination point for substrate. Position 116–120 (116–120 (NRMGF)) interacts with substrate. Residues Asn-144 and Asn-177 each contribute to the FMN site. Residue Asn-177 coordinates substrate. Ser-180 (nucleophile) is an active-site residue. Asn-182 is a substrate binding site. Lys-213 and Thr-241 together coordinate FMN. 242–243 (NT) serves as a coordination point for substrate. The disordered stretch occupies residues 249 to 268 (ASLHSDAADEEGGLSGAPIT). Residues Gly-264, Gly-291, and 312 to 313 (YT) contribute to the FMN site.

The protein belongs to the dihydroorotate dehydrogenase family. Type 2 subfamily. Monomer. FMN serves as cofactor.

Its subcellular location is the cell membrane. It catalyses the reaction (S)-dihydroorotate + a quinone = orotate + a quinol. It participates in pyrimidine metabolism; UMP biosynthesis via de novo pathway; orotate from (S)-dihydroorotate (quinone route): step 1/1. Functionally, catalyzes the conversion of dihydroorotate to orotate with quinone as electron acceptor. This chain is Dihydroorotate dehydrogenase (quinone), found in Natronomonas pharaonis (strain ATCC 35678 / DSM 2160 / CIP 103997 / JCM 8858 / NBRC 14720 / NCIMB 2260 / Gabara) (Halobacterium pharaonis).